We begin with the raw amino-acid sequence, 969 residues long: Poly(ADP-ribose) glycohydrolase (969 aa).

3 disordered regions span residues 1–149 (MSAG…QQQT), 161–341 (HAEQ…CQAR), and 368–400 (NNAG…GKRD). The A-domain stretch occupies residues 1-449 (MSAGPGWEPC…LPPEKKWLGT (449 aa)). Residues 10–16 (CTKRPRW) carry the Nuclear localization signal motif. Positions 69-84 (NATSFVFKQKTITTWM) are enriched in polar residues. Residues 77–84 (QKTITTWM) carry the PIP-box (PCNA interacting peptide) motif. The segment covering 87-100 (KGPKTAESESKENN) has biased composition (basic and acidic residues). Residues 101–113 (NTRIDSMMSSVQK) show a composition bias toward polar residues. The span at 116–125 (FYPHKVEKLE) shows a compositional bias: basic and acidic residues. Polar residues-rich tracts occupy residues 128 to 149 (PQLN…QQQT) and 179 to 189 (QLSNANIGQSP). S135 carries the post-translational modification Phosphoserine. T137 carries the post-translational modification Phosphothreonine. Residues 190–205 (HTDDHSDTDHEEDRDN) show a composition bias toward basic and acidic residues. A Phosphoserine modification is found at S195. T197 carries the post-translational modification Phosphothreonine. Polar residues predominate over residues 226–237 (ARSNCKCSGSRQ). Phosphoserine is present on residues S256, S259, S281, S286, S293, S297, and S311. A compositionally biased stretch (polar residues) spans 275-284 (KLTGQESSLG). Residues 311–325 (SEADEETSPVFDEQD) are compositionally biased toward acidic residues. Polar residues-rich tracts occupy residues 329–339 (SQTANKLSSCQ) and 369–387 (NAGT…SSLN). Residue K334 is modified to N6-acetyllysine. Residues 603–788 (QPIPLLKQKM…TEQYSEYTGY (186 aa)) form a catalytic region. 719–720 (IE) contributes to the substrate binding site. D730 is an active-site residue. Substrate is bound by residues N733 and Q747. Residues E748 and E749 contribute to the active site. Residues Y788 and 862–867 (NWGCGA) each bind substrate.

The protein belongs to the poly(ADP-ribose) glycohydrolase family. Interacts with PCNA. Interacts with NUDT5.

It is found in the nucleus. It carries out the reaction [(1''-&gt;2')-ADP-alpha-D-ribose](n) + H2O = [(1''-&gt;2')-ADP-alpha-D-ribose](n-1) + ADP-D-ribose. Its function is as follows. Poly(ADP-ribose) glycohydrolase that degrades poly(ADP-ribose) by hydrolyzing the ribose-ribose bonds present in poly(ADP-ribose). PARG acts both as an endo- and exoglycosidase, releasing poly(ADP-ribose) of different length as well as ADP-ribose monomers. It is however unable to cleave the ester bond between the terminal ADP-ribose and ADP-ribosylated residues, leaving proteins that are mono-ADP-ribosylated. Poly(ADP-ribose) is synthesized after DNA damage is only present transiently and is rapidly degraded by PARG. Required to prevent detrimental accumulation of poly(ADP-ribose) upon prolonged replicative stress, while it is not required for recovery from transient replicative stress. Responsible for the prevalence of mono-ADP-ribosylated proteins in cells, thanks to its ability to degrade poly(ADP-ribose) without cleaving the terminal protein-ribose bond. Required for retinoid acid-dependent gene transactivation, probably by removing poly(ADP-ribose) from histone demethylase KDM4D, allowing chromatin derepression at RAR-dependent gene promoters. Involved in the synthesis of ATP in the nucleus, together with PARP1, NMNAT1 and NUDT5. Nuclear ATP generation is required for extensive chromatin remodeling events that are energy-consuming. The polypeptide is Poly(ADP-ribose) glycohydrolase (Mus musculus (Mouse)).